We begin with the raw amino-acid sequence, 1169 residues long: Zinc finger protein 862 (1169 aa).

The region spanning 11-77 is the KRAB 1 domain; it reads VTFDDITVYL…SVQGQRSLLE (67 aa). Residues 135–218 form a TTF-type 1 zinc finger; that stretch reads KPRSIQKSWF…RDPIWAARFR (84 aa). The KRAB 2 domain maps to 333 to 404; sequence VVFEDVAVYF…DPNGPKWGKG (72 aa). The segment at 461 to 544 adopts a TTF-type 2 zinc-finger fold; the sequence is RPRSIQRSWF…KEDTPHTALV (84 aa).

The protein resides in the nucleus. Functionally, may be involved in transcriptional regulation. The sequence is that of Zinc finger protein 862 (ZNF862) from Homo sapiens (Human).